The primary structure comprises 418 residues: Actin-like protein 7B (418 aa).

The disordered stretch occupies residues 1–42; it reads MATKNSPSPKPMGTAQGDPGEAGTLPAPEAAGIRDTGSTQLK. S8 bears the Phosphoserine mark.

This sequence belongs to the actin family. In terms of tissue distribution, testis specific.

It is found in the cytoplasm. The protein resides in the cytoskeleton. The polypeptide is Actin-like protein 7B (Actl7b) (Mus musculus (Mouse)).